Here is a 270-residue protein sequence, read N- to C-terminus: Small ribosomal subunit protein eS1 (270 aa).

Disordered stretches follow at residues 1–21 (MAVG…KKKV) and 238–270 (GGGK…QESV).

It belongs to the eukaryotic ribosomal protein eS1 family. Component of the small ribosomal subunit. Mature ribosomes consist of a small (40S) and a large (60S) subunit. The 40S subunit contains about 33 different proteins and 1 molecule of RNA (18S). The 60S subunit contains about 49 different proteins and 3 molecules of RNA (28S, 5.8S and 5S).

The protein localises to the cytoplasm. This Aedes aegypti (Yellowfever mosquito) protein is Small ribosomal subunit protein eS1.